We begin with the raw amino-acid sequence, 395 residues long: L-methionine gamma-lyase (395 aa).

Residues 56 to 58 and 86 to 87 contribute to the pyridoxal 5'-phosphate site; these read YTR and GM. Position 111 (tyrosine 111) interacts with substrate. 206–208 contributes to the pyridoxal 5'-phosphate binding site; that stretch reads SVT. Lysine 209 carries the N6-(pyridoxal phosphate)lysine modification. Substrate is bound at residue arginine 373.

This sequence belongs to the trans-sulfuration enzymes family. L-methionine gamma-lyase subfamily. Homotetramer. It depends on pyridoxal 5'-phosphate as a cofactor.

It catalyses the reaction L-methionine + H2O = methanethiol + 2-oxobutanoate + NH4(+). It carries out the reaction L-homocysteine + H2O = 2-oxobutanoate + hydrogen sulfide + NH4(+) + H(+). Functionally, catalyzes the alpha,gamma-elimination of L-methionine to produce methanethiol, 2-oxobutanoate and ammonia; methanethiol (methyl mercaptan) is considered to be one of the main causes of the oral malodor associated with periodontitis. Also displays homocysteine desulfhydrase activity, degrading homocysteine to produce hydrogen sulfide, 2-oxobutanoate and ammonia. L-cysteine and S-methyl-L-cysteine are poor substrates for the enzyme. Plays an important role in the resistance of F.nucleatum to the antibacterial agent 3-chloro-DL-alanine (3CA), thanks to its 3CA chloride-lyase (deaminating) activity. This chain is L-methionine gamma-lyase, found in Fusobacterium nucleatum subsp. polymorphum (Fusobacterium polymorphum).